The sequence spans 276 residues: NADPH-dependent 7-cyano-7-deazaguanine reductase (276 aa).

A substrate-binding site is contributed by 80–82 (VES). 82–83 (SK) provides a ligand contact to NADPH. Cys183 (thioimide intermediate) is an active-site residue. Catalysis depends on Asp190, which acts as the Proton donor. A substrate-binding site is contributed by 222–223 (HE). 251-252 (RG) lines the NADPH pocket.

Belongs to the GTP cyclohydrolase I family. QueF type 2 subfamily. As to quaternary structure, homodimer.

It localises to the cytoplasm. It catalyses the reaction 7-aminomethyl-7-carbaguanine + 2 NADP(+) = 7-cyano-7-deazaguanine + 2 NADPH + 3 H(+). It participates in tRNA modification; tRNA-queuosine biosynthesis. Catalyzes the NADPH-dependent reduction of 7-cyano-7-deazaguanine (preQ0) to 7-aminomethyl-7-deazaguanine (preQ1). The sequence is that of NADPH-dependent 7-cyano-7-deazaguanine reductase from Burkholderia cenocepacia (strain HI2424).